The chain runs to 285 residues: HTH-type transcriptional regulator MurR (285 aa).

Residues 1-77 (MLYLTKIRNA…MALIGEYSAS (77 aa)) enclose the HTH rpiR-type domain. A DNA-binding region (H-T-H motif) is located at residues 37–56 (SRQMAKQLGISQSSIVKFAQ). The 141-residue stretch at 128-268 (IIEVISKAPF…FVGLVQLNDV (141 aa)) folds into the SIS domain.

Homotetramer.

The protein operates within amino-sugar metabolism; N-acetylmuramate degradation [regulation]. Functionally, represses the expression of the murPQ operon involved in the uptake and degradation of N-acetylmuramic acid (MurNAc). Binds to two adjacent inverted repeats within the operator region. MurNAc 6-phosphate, the substrate of MurQ, is the specific inducer that weakens binding of MurR to the operator. In Escherichia coli (strain ATCC 8739 / DSM 1576 / NBRC 3972 / NCIMB 8545 / WDCM 00012 / Crooks), this protein is HTH-type transcriptional regulator MurR.